A 293-amino-acid polypeptide reads, in one-letter code: Bifunctional protein FolD (293 aa).

NADP(+) contacts are provided by residues Gly-164–Ser-166, Ser-193, and Thr-234.

The protein belongs to the tetrahydrofolate dehydrogenase/cyclohydrolase family. As to quaternary structure, homodimer.

The enzyme catalyses (6R)-5,10-methylene-5,6,7,8-tetrahydrofolate + NADP(+) = (6R)-5,10-methenyltetrahydrofolate + NADPH. It catalyses the reaction (6R)-5,10-methenyltetrahydrofolate + H2O = (6R)-10-formyltetrahydrofolate + H(+). It participates in one-carbon metabolism; tetrahydrofolate interconversion. In terms of biological role, catalyzes the oxidation of 5,10-methylenetetrahydrofolate to 5,10-methenyltetrahydrofolate and then the hydrolysis of 5,10-methenyltetrahydrofolate to 10-formyltetrahydrofolate. This is Bifunctional protein FolD from Bacteroides thetaiotaomicron (strain ATCC 29148 / DSM 2079 / JCM 5827 / CCUG 10774 / NCTC 10582 / VPI-5482 / E50).